A 514-amino-acid polypeptide reads, in one-letter code: Cytochrome bd-II ubiquinol oxidase subunit 1 (514 aa).

The Cytoplasmic segment spans residues 1–22; the sequence is MWDVIDLSRWQFALTALYHFLF. Histidine 19 contacts heme. Residues 23–42 form a helical membrane-spanning segment; sequence VPLTLGLIFLLAIMETIYVV. The Periplasmic segment spans residues 43 to 94; it reads TGKTIYRDMTRFWGKLFGINFALGVATGLTMEFQFGTNWSFYSNYVGDIFGA. A helical transmembrane segment spans residues 95-114; that stretch reads PLAMEALMAFFLESTFVGLF. Residues 115–129 lie on the Cytoplasmic side of the membrane; sequence FFGWQRLNKYQHLLV. Residues 130 to 149 form a helical membrane-spanning segment; that stretch reads TWLVAFGSNLSALWILNANG. Residues 150–187 lie on the Periplasmic side of the membrane; it reads WMQYPTGAHFDIDTLRMEMTSFSELVFNPVSQVKFVHT. Histidine 186 serves as a coordination point for heme. The helical transmembrane segment at 188–207 threads the bilayer; the sequence is VMAGYVTGAMFIMAISAWYL. The Cytoplasmic segment spans residues 208 to 219; sequence LRGRERNVALRS. A helical transmembrane segment spans residues 220–239; the sequence is FAIGSVFGTLAIIGTLQLGD. Topologically, residues 240–392 are periplasmic; sequence SSAYEVAQVQ…VAPVFWSFRI (153 aa). Residue methionine 393 participates in heme binding. The chain crosses the membrane as a helical span at residues 393-412; it reads MVGCGSLLLLVMLIALVQTL. Residues 413–470 are Cytoplasmic-facing; the sequence is RGKIDQHRWVLKMALWSLPLPWIAIEAGWFMTEFGRQPWAIQDILPTYSAHSALTTGQ. The chain crosses the membrane as a helical span at residues 471–490; the sequence is LAFSLIMIVGLYTLFLIAEV. Over 491–514 the chain is Periplasmic; the sequence is YLMQKYARLGPSAMQSEQPTQQQG.

Belongs to the cytochrome ubiquinol oxidase subunit 1 family. Heterodimer of subunits I and II. Requires heme as cofactor. The N-terminus is blocked.

Its subcellular location is the cell inner membrane. The catalysed reaction is 2 a ubiquinol + O2 + n H(+)(in) = 2 a ubiquinone + 2 H2O + n H(+)(out). It functions in the pathway energy metabolism; oxidative phosphorylation. Inhibited by cyanide; is more sensitive to cyanide than cytochrome bd-I oxidase. A terminal oxidase that catalyzes quinol-dependent, Na(+)-independent oxygen uptake. Prefers menadiol over other quinols although ubiquinol was not tested. Generates a proton motive force using protons and electrons from opposite sides of the membrane to generate H(2)O, transferring 1 proton/electron. The chain is Cytochrome bd-II ubiquinol oxidase subunit 1 (appC) from Escherichia coli (strain K12).